The primary structure comprises 309 residues: MAPKFPDSVEELRAAGNESFRNGQYAEASALYGRALRVLQAQGSSDPEEESVLYSNRAACHLKDGNCRDCIKDCTSALALVPFSIKPLLRRASAYEALEKYPMAYVDYKTVLQIDDNVTSAVEGINRMTRALMDSLGPEWRLKLPSIPLVPVSAQKRWNSLPSENHKEMAKSKSKETTATKNRVPSAGDVEKARVLKEEGNELVKKGNHKKAIEKYSESLLCSNLESATYSNRALCYLVLKQYTEAVKDCTEALKLDGKNVKAFYRRAQAHKALKDYKSSFADISNLLQIEPRNGPAQKLRQEVKQNLH.

Residue Ser8 is modified to Phosphoserine. 3 TPR repeats span residues Val9–Gln42, Ser51–Ser84, and Lys86–Val118. Ser160 is subject to Phosphoserine. The segment at Leu161–Asp189 is disordered. Residues Glu164 to Thr178 show a composition bias toward basic and acidic residues. At Ser186 the chain carries Phosphoserine. TPR repeat units follow at residues Ala193–Glu226, Ser227–Asn260, and Lys262–Asn294. Lys197 is covalently cross-linked (Glycyl lysine isopeptide (Lys-Gly) (interchain with G-Cter in SUMO2)).

The protein belongs to the Tom34 family. As to quaternary structure, interacts with HSP90A, VCP, ATP6V1D, KIAA0665, AMPK, and DMAP1 through its TPR repeat. As to expression, ubiquitous.

The protein localises to the cytoplasm. It localises to the mitochondrion outer membrane. Its function is as follows. Plays a role in the import of cytosolically synthesized preproteins into mitochondria. Binds the mature portion of precursor proteins. Interacts with cellular components, and possesses weak ATPase activity. May be a chaperone-like protein that helps to keep newly synthesized precursors in an unfolded import compatible state. The sequence is that of Mitochondrial import receptor subunit TOM34 (TOMM34) from Homo sapiens (Human).